The chain runs to 297 residues: 1D-myo-inositol 2-acetamido-2-deoxy-alpha-D-glucopyranoside deacetylase (297 aa).

Positions 11, 14, and 154 each coordinate Zn(2+).

The protein belongs to the MshB deacetylase family. Zn(2+) serves as cofactor.

The enzyme catalyses 1D-myo-inositol 2-acetamido-2-deoxy-alpha-D-glucopyranoside + H2O = 1D-myo-inositol 2-amino-2-deoxy-alpha-D-glucopyranoside + acetate. Catalyzes the deacetylation of 1D-myo-inositol 2-acetamido-2-deoxy-alpha-D-glucopyranoside (GlcNAc-Ins) in the mycothiol biosynthesis pathway. This is 1D-myo-inositol 2-acetamido-2-deoxy-alpha-D-glucopyranoside deacetylase from Tsukamurella paurometabola (strain ATCC 8368 / DSM 20162 / CCUG 35730 / CIP 100753 / JCM 10117 / KCTC 9821 / NBRC 16120 / NCIMB 702349 / NCTC 13040) (Corynebacterium paurometabolum).